Here is a 229-residue protein sequence, read N- to C-terminus: Transmembrane emp24 domain-containing protein 5 (229 aa).

Positions 1-27 (MGGRMWLPFPVLLLSALPAALLRGAAG) are cleaved as a signal peptide. The Lumenal segment spans residues 28 to 196 (FTPSLDSDFT…IQESNFDRVN (169 aa)). Positions 45–126 (KECFYQPMPL…EKVIFFELIL (82 aa)) constitute a GOLD domain. The chain crosses the membrane as a helical span at residues 197 to 217 (FWSVVNLMVMVVVSAIQVYTL). The Cytoplasmic segment spans residues 218–229 (KSLFEDKRKSRT).

It belongs to the EMP24/GP25L family. Interacts with TMED9 and TMED10.

The protein localises to the endoplasmic reticulum membrane. The protein resides in the golgi apparatus. It localises to the cis-Golgi network membrane. It is found in the endoplasmic reticulum-Golgi intermediate compartment membrane. In terms of biological role, potential role in vesicular protein trafficking, mainly in the early secretory pathway. Required for the maintenance of the Golgi apparatus; involved in protein exchange between Golgi stacks during assembly. Probably not required for COPI-vesicle-mediated retrograde transport. The polypeptide is Transmembrane emp24 domain-containing protein 5 (Tmed5) (Mus musculus (Mouse)).